The primary structure comprises 524 residues: Solute carrier family 35 member F5 (524 aa).

A run of 2 helical transmembrane segments spans residues 69–89 (MALG…SSEL) and 101–121 (FFST…FIIW). The residue at position 207 (S207) is a Phosphoserine. The next 8 helical transmembrane spans lie at 244-264 (ISFF…EALS), 269-289 (AIVN…AAVF), 297-317 (FTLS…LVNL), 328-348 (TIGS…IVMI), 362-382 (MFFG…FFLL), 396-416 (VVLL…EFLW), 421-441 (FLTS…LSII), and 453-473 (WLFF…TLLC). The region spanning 253–317 (FLANLSYQEA…SIGGVVLVNL (65 aa)) is the EamA domain.

The protein belongs to the SLC35F solute transporter family.

Its subcellular location is the membrane. Putative solute transporter. The polypeptide is Solute carrier family 35 member F5 (Slc35f5) (Mus musculus (Mouse)).